The sequence spans 429 residues: Phosphomethylpyrimidine synthase (429 aa).

Substrate contacts are provided by residues Asn66, Met95, Tyr124, His163, 185-187 (SRG), 226-229 (DAMR), and Glu265. Residue His269 participates in Zn(2+) binding. Tyr292 contacts substrate. His333 provides a ligand contact to Zn(2+). Cys409, Cys412, and Cys416 together coordinate [4Fe-4S] cluster.

It belongs to the ThiC family. [4Fe-4S] cluster serves as cofactor.

It carries out the reaction 5-amino-1-(5-phospho-beta-D-ribosyl)imidazole + S-adenosyl-L-methionine = 4-amino-2-methyl-5-(phosphooxymethyl)pyrimidine + CO + 5'-deoxyadenosine + formate + L-methionine + 3 H(+). It participates in cofactor biosynthesis; thiamine diphosphate biosynthesis. In terms of biological role, catalyzes the synthesis of the hydroxymethylpyrimidine phosphate (HMP-P) moiety of thiamine from aminoimidazole ribotide (AIR) in a radical S-adenosyl-L-methionine (SAM)-dependent reaction. The sequence is that of Phosphomethylpyrimidine synthase from Methanopyrus kandleri (strain AV19 / DSM 6324 / JCM 9639 / NBRC 100938).